The chain runs to 101 residues: Putative pterin-4-alpha-carbinolamine dehydratase (101 aa).

It belongs to the pterin-4-alpha-carbinolamine dehydratase family.

It carries out the reaction (4aS,6R)-4a-hydroxy-L-erythro-5,6,7,8-tetrahydrobiopterin = (6R)-L-erythro-6,7-dihydrobiopterin + H2O. The polypeptide is Putative pterin-4-alpha-carbinolamine dehydratase (Rhizobium rhizogenes (strain K84 / ATCC BAA-868) (Agrobacterium radiobacter)).